We begin with the raw amino-acid sequence, 224 residues long: MGQKGCPVGFRTAVTKKWRSLWYGNNQEFGKFLIEDVRIREFLKKKPSCQGAAGFVVKRMSGKIEVTIHTARPGLVIGKKGAEVESLKAELKKLTGKDVWVEIAEVKRPELNAQLVADGIAKQIERRVSFRRAMKKALQSVMDAGALGVKVQVSGRLAGAEIARSEWYKNGRVPLHTLRADIDYATASAETTYGIIGIKVWINLGEKKAVPAANHAGAASTAAA.

The 69-residue stretch at 39–107 (IREFLKKKPS…DVWVEIAEVK (69 aa)) folds into the KH type-2 domain.

Belongs to the universal ribosomal protein uS3 family. Part of the 30S ribosomal subunit. Forms a tight complex with proteins S10 and S14.

In terms of biological role, binds the lower part of the 30S subunit head. Binds mRNA in the 70S ribosome, positioning it for translation. This Chlamydia muridarum (strain MoPn / Nigg) protein is Small ribosomal subunit protein uS3.